The chain runs to 179 residues: Large ribosomal subunit protein uL6 (179 aa).

The protein belongs to the universal ribosomal protein uL6 family. As to quaternary structure, part of the 50S ribosomal subunit.

In terms of biological role, this protein binds to the 23S rRNA, and is important in its secondary structure. It is located near the subunit interface in the base of the L7/L12 stalk, and near the tRNA binding site of the peptidyltransferase center. The protein is Large ribosomal subunit protein uL6 of Crocosphaera subtropica (strain ATCC 51142 / BH68) (Cyanothece sp. (strain ATCC 51142)).